The primary structure comprises 814 residues: MAVQRAASPRRPPAPLWPRLLLPLLLLLLPAPSEGLGHSAELAFAVEPSDDVAVPGQPIVLDCRVEGTPPVRITWRKNGVELPESTHSTLLANGSLMIRHFRLEPGGSPSDEGDYECVAQNRFGLVVSRKARIQAATMSDFHVHPQATVGEEGGVARFQCQIHGLPKPLITWEKNRVPIDTDNERYTLLPKGVLQITGLRAEDGGIFHCVASNIASIRISHGARLTVSGSGSGAYKEPAILVGPENLTLTVHQTAVLECVATGNPRPIVSWSRLDGRPIGVEGIQVLGTGNLIISDVTVQHSGVYVCAANRPGTRVRRTAQGRLVVQAPAEFVQHPQSISRPAGTTAMFTCQAQGEPPPHVTWLKNGQVLGPGGHVRLKNNNSTLTISGIGPEDEAIYQCVAENSAGSSQASARLTVLWAEGLPGPPRNVRAVSVSSTEVRVSWSEPLANTKEIIGYVLHIRKAADPPELEYQEAVSKSTFQHLVSDLEPSTAYSFYIKAYTPRGASSASVPTLASTLGEAPAPPPLSVRVLGSSSLQLLWEPWPRLAQHEGGFKLFYRPASKTSFTGPILLPGTVSSYNLSQLDPTAVYEVKLLAYNQHGDGNATVRFVSLRGASERTALSPPCDCRKEEAANQTSTTGIVIGIHIGVTCIIFCVLFLLFGQRGRVLLCKDVENQLSPPQGPRSQRDPGILALNGARRGQRGQLGRDEKRVDMKELEQLFPPASAAGQPDPRPTQDPAAPAPCEETQLSVLPLQGCGLMEGKTTEAKTTEATAPCAGLAAAPPPPDGGPGLLSEGQASRPAAARVTQPAHSEQ.

Residues 1–35 (MAVQRAASPRRPPAPLWPRLLLPLLLLLLPAPSEG) form the signal peptide. Ig-like C2-type domains lie at 36 to 139 (LGHS…ATMS), 140 to 220 (DFHV…IRIS), 238 to 321 (PAIL…RTAQ), and 329 to 416 (PAEF…ARLT). Intrachain disulfides connect C63/C117 and C160/C209. N-linked (GlcNAc...) asparagine glycosylation is present at N93. N246 carries N-linked (GlcNAc...) asparagine glycosylation. Disulfide bonds link C259–C307 and C351–C400. Residues N381 and N382 are each glycosylated (N-linked (GlcNAc...) asparagine). 2 Fibronectin type-III domains span residues 426–520 (PPRN…TLGE) and 523–618 (APPP…ASER). N-linked (GlcNAc...) asparagine glycans are attached at residues N580, N604, and N634. A helical transmembrane segment spans residues 641-661 (IVIGIHIGVTCIIFCVLFLLF). Disordered regions lie at residues 722–743 (PPAS…APAP) and 762–814 (GKTT…HSEQ). Over residues 770–781 (TEATAPCAGLAA) the composition is skewed to low complexity.

This sequence belongs to the immunoglobulin superfamily. DCC family.

Its subcellular location is the membrane. The chain is Immunoglobulin superfamily DCC subclass member 3 (IGDCC3) from Homo sapiens (Human).